Here is a 142-residue protein sequence, read N- to C-terminus: Large ribosomal subunit protein bL17 (142 aa).

This sequence belongs to the bacterial ribosomal protein bL17 family. In terms of assembly, part of the 50S ribosomal subunit. Contacts protein L32.

This chain is Large ribosomal subunit protein bL17, found in Chlamydia muridarum (strain MoPn / Nigg).